Here is a 105-residue protein sequence, read N- to C-terminus: Thiosulfate sulfurtransferase GlpE (105 aa).

Residues 15–103 (MQQGAILVDI…WCRAELPIDT (89 aa)) enclose the Rhodanese domain. Cys63 functions as the Cysteine persulfide intermediate in the catalytic mechanism.

It belongs to the GlpE family.

The protein resides in the cytoplasm. The catalysed reaction is thiosulfate + hydrogen cyanide = thiocyanate + sulfite + 2 H(+). It carries out the reaction thiosulfate + [thioredoxin]-dithiol = [thioredoxin]-disulfide + hydrogen sulfide + sulfite + 2 H(+). Functionally, transferase that catalyzes the transfer of sulfur from thiosulfate to thiophilic acceptors such as cyanide or dithiols. May function in a CysM-independent thiosulfate assimilation pathway by catalyzing the conversion of thiosulfate to sulfite, which can then be used for L-cysteine biosynthesis. This chain is Thiosulfate sulfurtransferase GlpE, found in Haemophilus influenzae (strain ATCC 51907 / DSM 11121 / KW20 / Rd).